Consider the following 458-residue polypeptide: UDP-N-acetylmuramoylalanine--D-glutamate ligase (458 aa).

Position 124–130 (124–130 (GSDGKTT)) interacts with ATP.

The protein belongs to the MurCDEF family.

The protein localises to the cytoplasm. The catalysed reaction is UDP-N-acetyl-alpha-D-muramoyl-L-alanine + D-glutamate + ATP = UDP-N-acetyl-alpha-D-muramoyl-L-alanyl-D-glutamate + ADP + phosphate + H(+). Its pathway is cell wall biogenesis; peptidoglycan biosynthesis. In terms of biological role, cell wall formation. Catalyzes the addition of glutamate to the nucleotide precursor UDP-N-acetylmuramoyl-L-alanine (UMA). The polypeptide is UDP-N-acetylmuramoylalanine--D-glutamate ligase (Clostridium botulinum (strain Okra / Type B1)).